Here is a 629-residue protein sequence, read N- to C-terminus: Probable potassium transport system protein Kup 3 (629 aa).

A run of 12 helical transmembrane segments spans residues 20–40 (LSLS…LYTF), 61–81 (VSLI…HFAL), 106–126 (PFII…GTIT), 143–163 (PSLK…LFAI), 171–191 (IGKA…ILGA), 209–229 (GLSF…GVFL), 253–273 (WFGL…ALVL), 291–311 (FLLP…QAII), 343–363 (IYIG…TIGF), 372–392 (AYGI…FIAL), 400–420 (IITS…FFAA), and 425–445 (FING…MMYI).

It belongs to the HAK/KUP transporter (TC 2.A.72) family.

It localises to the cell inner membrane. The enzyme catalyses K(+)(in) + H(+)(in) = K(+)(out) + H(+)(out). In terms of biological role, transport of potassium into the cell. Likely operates as a K(+):H(+) symporter. This Legionella pneumophila subsp. pneumophila (strain Philadelphia 1 / ATCC 33152 / DSM 7513) protein is Probable potassium transport system protein Kup 3.